The sequence spans 520 residues: ATP-dependent clpX-like chaperone, mitochondrial (520 aa).

The transit peptide at 1 to 13 directs the protein to the mitochondrion; that stretch reads MLKSASQNFFRAY. An ATP-binding site is contributed by 140–147; it reads GPSGSGKT.

Belongs to the ClpX chaperone family. As to quaternary structure, homohexamer that forms a ring structure; this hexamerization requires ATP binding. Interacts with HEM1.

It localises to the mitochondrion inner membrane. Its function is as follows. ATP-dependent unfoldase that stimulates the incorporation of the pyridoxal phosphate cofactor into 5-aminolevulinate synthase (HEM1), thereby activating 5-aminolevulinate (ALA) synthesis, the first step in heme biosynthesis. Up-regulates heme biosynthesis. The protein is ATP-dependent clpX-like chaperone, mitochondrial of Saccharomyces cerevisiae (strain ATCC 204508 / S288c) (Baker's yeast).